The primary structure comprises 277 residues: MESLLECFAITDGKCHPDCLKANNEQEDYDACQSAALVAVSLISSARVIFKIDSKYTEYSPQYLVDNVGKEEVEGEMDQPSCQYTVGNLLSYLVENVWTKKEVRQREMDQQRREFTVKDCFEFAFKKGLPRNGHWAHVGCIFPVPPFACQIPRVPMKGEVIEAANVSEALKLGMQQPAAARLHLFSPEFDLVGEGIYDGPSGNETRYVGLRDVLMVEAEKIKGETVFTVQICYKKKTSFVKVSTRSMILPLNGDDESQVTEPACLLVDFCIPRFSIN.

The protein belongs to the heat induced plant HTT protein family. Interacts with the heat shock proteins HSP70-14 and At2g33735/HSP40, and with NFYC2 in both cytoplasm and nucleus. As to expression, expressed ubiquitously, including in seedlings, leaves, stems, inflorescences and siliques.

It localises to the cytoplasm. Its subcellular location is the nucleus. Functionally, mediates both basal and acquired thermotolerance via HSFA1s-directed pathways (e.g. HSFA1A, HSFA1B, and HSFA1D). Triggers the expression of HSFA1A and HSFA1B. This chain is Protein HEAT-INDUCED TAS1 TARGET 1, found in Arabidopsis thaliana (Mouse-ear cress).